Here is a 93-residue protein sequence, read N- to C-terminus: Large ribosomal subunit protein uL23 (93 aa).

This sequence belongs to the universal ribosomal protein uL23 family. Part of the 50S ribosomal subunit. Contacts protein L29, and trigger factor when it is bound to the ribosome.

Functionally, one of the early assembly proteins it binds 23S rRNA. One of the proteins that surrounds the polypeptide exit tunnel on the outside of the ribosome. Forms the main docking site for trigger factor binding to the ribosome. The protein is Large ribosomal subunit protein uL23 of Campylobacter curvus (strain 525.92).